Reading from the N-terminus, the 263-residue chain is Small ribosomal subunit protein eS4 (263 aa).

An S4 RNA-binding domain is found at 42–104 (LPLIIFLRNR…TGEHFRLVYD (63 aa)).

This sequence belongs to the eukaryotic ribosomal protein eS4 family.

In Gallus gallus (Chicken), this protein is Small ribosomal subunit protein eS4 (RPS4).